A 239-amino-acid polypeptide reads, in one-letter code: Probable plastid-lipid-associated protein 8, chloroplastic (239 aa).

A chloroplast-targeting transit peptide spans 1-52 (MAATASSLTIASSFSEPRTQIHSSRRLNLPLQYSIPYKVLRSRSRRLGLVVS). S53 is modified (N-acetylserine).

Belongs to the PAP/fibrillin family.

It is found in the plastid. The protein resides in the chloroplast. This Arabidopsis thaliana (Mouse-ear cress) protein is Probable plastid-lipid-associated protein 8, chloroplastic (PAP8).